The chain runs to 81 residues: RBAK downstream neighbor protein (81 aa).

The first 22 residues, 1–22, serve as a signal peptide directing secretion; that stretch reads MWPPLLLLLLLLPAAPVPTAKA.

Its subcellular location is the secreted. This is RBAK downstream neighbor protein (RBAKDN) from Homo sapiens (Human).